A 248-amino-acid chain; its full sequence is MAPGAPSSSPSPILAALLFSSLVLSPAQAIVVYTDKEVYGAVGSRVTLHCSFWSSEWVSDDISFTWRYQPEGGRDAISIFHYAKGQPYIDEVGTFKERIQWVGDPQWKDGSIVIHNLDYSDNGTFTCDVKNPPDIVGKTSQVTLYVFEKVPTRYGVVLGAVIGGVLGVVLLVLLLFYVVRYCWLRRQAALQRRLSAMEKGKLHKPGKDTSKRGRQTPVLYAMLDHSRSTKAASEKKAKGLGESRKDKK.

A signal peptide spans 1 to 29 (MAPGAPSSSPSPILAALLFSSLVLSPAQA). The region spanning 30-143 (IVVYTDKEVY…DIVGKTSQVT (114 aa)) is the Ig-like V-type domain. Residues 30–153 (IVVYTDKEVY…LYVFEKVPTR (124 aa)) are Extracellular-facing. The cysteines at positions 50 and 127 are disulfide-linked. An N-linked (GlcNAc...) (complex) asparagine glycan is attached at Asn-122. The helical transmembrane segment at 154-179 (YGVVLGAVIGGVLGVVLLVLLLFYVV) threads the bilayer. The Cytoplasmic segment spans residues 180-248 (RYCWLRRQAA…GLGESRKDKK (69 aa)). The residue at position 210 (Ser-210) is a Phosphoserine; by PKC. The segment at 222–248 (MLDHSRSTKAASEKKAKGLGESRKDKK) is disordered. Residues 224-248 (DHSRSTKAASEKKAKGLGESRKDKK) show a composition bias toward basic and acidic residues. Ser-226 and Ser-228 each carry phosphoserine. 2 positions are modified to phosphoserine; by PKC: Ser-233 and Ser-243.

Belongs to the myelin P0 protein family. As to quaternary structure, homodimer and homotetramer. N-glycosylated; contains sulfate-substituted glycan.

The protein resides in the cell membrane. Is an adhesion molecule necessary for normal myelination in the peripheral nervous system. It mediates adhesion between adjacent myelin wraps and ultimately drives myelin compaction. This chain is Myelin protein P0 (MPZ), found in Equus caballus (Horse).